The primary structure comprises 592 residues: A-type ATP synthase subunit A (592 aa).

Gly234–Thr241 provides a ligand contact to ATP.

The protein belongs to the ATPase alpha/beta chains family. As to quaternary structure, has multiple subunits with at least A(3), B(3), C, D, E, F, H, I and proteolipid K(x).

It is found in the cell membrane. It carries out the reaction ATP + H2O + 4 H(+)(in) = ADP + phosphate + 5 H(+)(out). In terms of biological role, component of the A-type ATP synthase that produces ATP from ADP in the presence of a proton gradient across the membrane. The A chain is the catalytic subunit. This Nitrosopumilus maritimus (strain SCM1) protein is A-type ATP synthase subunit A.